The sequence spans 217 residues: Probable transaldolase (217 aa).

The active-site Schiff-base intermediate with substrate is K83.

The protein belongs to the transaldolase family. Type 3B subfamily.

Its subcellular location is the cytoplasm. It carries out the reaction D-sedoheptulose 7-phosphate + D-glyceraldehyde 3-phosphate = D-erythrose 4-phosphate + beta-D-fructose 6-phosphate. It functions in the pathway carbohydrate degradation; pentose phosphate pathway; D-glyceraldehyde 3-phosphate and beta-D-fructose 6-phosphate from D-ribose 5-phosphate and D-xylulose 5-phosphate (non-oxidative stage): step 2/3. Its function is as follows. Transaldolase is important for the balance of metabolites in the pentose-phosphate pathway. In Brucella abortus (strain S19), this protein is Probable transaldolase.